A 74-amino-acid polypeptide reads, in one-letter code: uncharacterized protein (74 aa).

2 consecutive transmembrane segments (helical) span residues 3–23 (YSAL…CFSF) and 35–55 (ILFF…MLLT).

The protein resides in the cell membrane. This is an uncharacterized protein from Mycoplasma genitalium (strain ATCC 33530 / DSM 19775 / NCTC 10195 / G37) (Mycoplasmoides genitalium).